A 273-amino-acid polypeptide reads, in one-letter code: Elongation factor Ts (273 aa).

The involved in Mg(2+) ion dislocation from EF-Tu stretch occupies residues 79 to 82; that stretch reads TDFV.

The protein belongs to the EF-Ts family.

The protein resides in the cytoplasm. Functionally, associates with the EF-Tu.GDP complex and induces the exchange of GDP to GTP. It remains bound to the aminoacyl-tRNA.EF-Tu.GTP complex up to the GTP hydrolysis stage on the ribosome. The protein is Elongation factor Ts of Hydrogenobaculum sp. (strain Y04AAS1).